A 595-amino-acid polypeptide reads, in one-letter code: Isoprene synthase, chloroplastic (595 aa).

Residues 1–37 constitute a chloroplast transit peptide; sequence MATELLCLHRPISLTHKLFRNPLPKVIQATPLTLKLR. D345 provides a ligand contact to dimethylallyl diphosphate. Residues D345 and D349 each contribute to the Mg(2+) site. Residues 345–349 carry the DDXXD motif motif; that stretch reads DDIYD. 3 residues coordinate dimethylallyl diphosphate: E423, R486, and N489. 3 residues coordinate Mg(2+): N489, S493, and E497.

This sequence belongs to the terpene synthase family. Tpsb subfamily. The cofactor is Mg(2+). In terms of tissue distribution, predominantly expressed in leaves.

It is found in the plastid. It localises to the chloroplast. It catalyses the reaction dimethylallyl diphosphate = isoprene + diphosphate. Its pathway is terpene metabolism. In terms of biological role, lyase that catalyzes the formation of isoprene from dimethylallyl diphosphate, but not from isopentenyl diphosphate or geranyl diphosphate. In Populus alba (White poplar), this protein is Isoprene synthase, chloroplastic.